We begin with the raw amino-acid sequence, 377 residues long: MERYIIKDGKKLRYGYTTGSCATAASKAAAQMLLQPGEVHEVDIDTPKGWSLKLKVEDIQRSHGAVSCAIIKDAGDDPDVTNKLAIYSKLIWRQDTKIEIHGGEGVGTVTRPGLQIPVGKPAINPIPLQMIEREVREVIGPGRGVDIVISVPKGQEVAKKTFNPKLGIQGGISILGTSGIVEPMSEEAMKDSLALELPMAKAEKIKTFVFVPGNYGRDMAREKYKIHDKNMIKISNFVGFMMDQSVIQNVERILIIGHIGKLVKVAGGIFHTHSKVADGRREILAAHLAALGASQQLVLRVLESNTTEEAVGLIQEKGFDRLFSHLADKITEKCVERTQGNIEIGTIIFSMEQGVLAHCSQAGRLLEILKSEGVKDE.

It belongs to the CbiD family.

It carries out the reaction Co-precorrin-5B + S-adenosyl-L-methionine = Co-precorrin-6A + S-adenosyl-L-homocysteine. It functions in the pathway cofactor biosynthesis; adenosylcobalamin biosynthesis; cob(II)yrinate a,c-diamide from sirohydrochlorin (anaerobic route): step 6/10. Catalyzes the methylation of C-1 in cobalt-precorrin-5B to form cobalt-precorrin-6A. This chain is Cobalt-precorrin-5B C(1)-methyltransferase, found in Alkaliphilus metalliredigens (strain QYMF).